Here is a 166-residue protein sequence, read N- to C-terminus: UBA-like domain-containing protein 2 (166 aa).

Residues 120–166 are disordered; it reads QQPVWLPPASPTTHLHHHHHHPQPVWPPNSQPTGGPQKAMAAMDGQR.

This sequence belongs to the UBALD family.

In Xenopus tropicalis (Western clawed frog), this protein is UBA-like domain-containing protein 2 (ubald2).